A 159-amino-acid polypeptide reads, in one-letter code: NADH-quinone oxidoreductase subunit I (159 aa).

4Fe-4S ferredoxin-type domains follow at residues arginine 51–aspartate 80 and threonine 90–asparagine 119. [4Fe-4S] cluster is bound by residues cysteine 60, cysteine 63, cysteine 66, cysteine 70, cysteine 99, cysteine 102, cysteine 105, and cysteine 109.

Belongs to the complex I 23 kDa subunit family. As to quaternary structure, NDH-1 is composed of 14 different subunits. Subunits NuoA, H, J, K, L, M, N constitute the membrane sector of the complex. [4Fe-4S] cluster serves as cofactor.

Its subcellular location is the cell membrane. The catalysed reaction is a quinone + NADH + 5 H(+)(in) = a quinol + NAD(+) + 4 H(+)(out). In terms of biological role, NDH-1 shuttles electrons from NADH, via FMN and iron-sulfur (Fe-S) centers, to quinones in the respiratory chain. The immediate electron acceptor for the enzyme in this species is believed to be ubiquinone. Couples the redox reaction to proton translocation (for every two electrons transferred, four hydrogen ions are translocated across the cytoplasmic membrane), and thus conserves the redox energy in a proton gradient. This is NADH-quinone oxidoreductase subunit I from Rickettsia africae (strain ESF-5).